Reading from the N-terminus, the 388-residue chain is Carbohydrate sulfotransferase 4 (388 aa).

At 1–7 (MMLLKKG) the chain is on the cytoplasmic side. Residues 8–28 (RLLMFLGSQVIVVALFIHMSV) form a helical; Signal-anchor for type II membrane protein membrane-spanning segment. Residues 29-388 (HRHLSQREES…HILGQVFREG (360 aa)) are Lumenal-facing. 3'-phosphoadenylyl sulfate contacts are provided by residues 50–56 (WRSGSSF) and 204–212 (RDPRAVFRS). Residues N307, N328, and N369 are each glycosylated (N-linked (GlcNAc...) asparagine).

The protein belongs to the sulfotransferase 1 family. Gal/GlcNAc/GalNAc subfamily. In terms of assembly, monomer. As to expression, specifically expressed in high endothelial venules (HEV) of peripheral lymph nodes.

It localises to the golgi apparatus membrane. The catalysed reaction is 3-O-{N-acetyl-beta-D-glucosaminyl-(1-&gt;3)-beta-D-galactosyl-(1-&gt;3)-N-acetyl-alpha-D-galactosaminyl}-L-threonyl-[protein] + 3'-phosphoadenylyl sulfate = 3-O-{6-O-sulfo-N-acetyl-beta-D-glucosaminyl-(1-&gt;3)-beta-D-galactosyl-(1-&gt;3)-N-acetyl-alpha-D-galactosaminyl}-L-threonyl-[protein] + adenosine 3',5'-bisphosphate + H(+). The enzyme catalyses 3-O-{N-acetyl-beta-D-glucosaminyl-(1-&gt;3)-beta-D-galactosyl-(1-&gt;3)-N-acetyl-alpha-D-galactosaminyl}-L-seryl-[protein] + 3'-phosphoadenylyl sulfate = 3-O-{6-O-sulfo-N-acetyl-beta-D-glucosaminyl-(1-&gt;3)-beta-D-galactosyl-(1-&gt;3)-N-acetyl-alpha-D-galactosaminyl}-L-seryl-[protein] + adenosine 3',5'-bisphosphate + H(+). It catalyses the reaction a 3-O-{beta-D-galactosyl-(1-&gt;3)-[N-acetyl-beta-D-glucosaminyl-(1-&gt;6)]-N-acetyl-alpha-D-galactosaminyl}-L-threonyl-[protein] + 3'-phosphoadenylyl sulfate = 3-O-{beta-D-galactosyl-(1-&gt;3)-[6-O-sulfo-N-acetyl-beta-D-glucosaminyl-(1-&gt;6)]-N-acetyl-alpha-D-galactosaminyl}-L-threonyl-[protein] + adenosine 3',5'-bisphosphate + H(+). It carries out the reaction 3-O-{beta-D-galactosyl-(1-&gt;3)-[N-acetyl-beta-D-glucosaminyl-(1-&gt;6)]-N-acetyl-alpha-D-galactosaminyl}-L-seryl-[protein] + 3'-phosphoadenylyl sulfate = 3-O-{beta-D-galactosyl-(1-&gt;3)-[6-O-sulfo-N-acetyl-beta-D-glucosaminyl-(1-&gt;6)]-N-acetyl-alpha-D-galactosaminyl}-L-seryl-[protein] + adenosine 3',5'-bisphosphate + H(+). Its pathway is protein modification; carbohydrate sulfation. Sulfotransferase involved in SELL/L-selectin ligand biosynthesis pathway. Catalyzes the transfer of the sulfate group from 3'-phospho-5'-adenylyl sulfate (PAPS) onto the hydroxyl group at C-6 position of the non-reducing N-acetylglucosamine (GlcNAc) residue within O-linked mucin-type glycans. Contributes to generate sialyl 6-sulfo Lewis X determinant (also known as MECA-79 epitope) for SELL recognition, a prerequisite for continuous lymphocyte homing into peripheral lymph nodes and antigen immune surveillance. Transfers the sulfate group primarily on core 2 GlcNAcbeta1-6(Galbeta1-3)GalNAcalphaSer/Thr and extended core 1 GlcNAcbeta1-3Galbeta1-3GalNAcalphaSer/Thr based O-linked glycans on CD34 and GLYCAM1 peripheral node addressins (PNAds) expressed on the lumenal side of high endothelial venules (HEVs). The recognition of PNAds by SELL initiates a multistep process comprising tethering and rolling of blood lymphocytes on HEVs against the blood flow, followed by chemokine signaling, integrin-mediated lymphocyte adhesion onto endothelial cells and lymphocyte transendothelial migration. Modulates rolling velocity and differential T and B lymphocyte recruitment into peripheral lymph nodes, with a major role in B lymphocyte homing. Might be redundant in sulfation of MADCAM1 and lymphocyte trafficking to mesenteric lymph nodes. Can also sulfonate core 3 GlcNAcbeta1-3GalNAc-R based glycans as well as GlcNAcbeta1-3Galbeta1-Glc, GlcNAcbeta1-6ManOMe and GlcNAcbeta1-2Man oligosaccharides, which might be ectopically expressed during tumorigenesis. This chain is Carbohydrate sulfotransferase 4 (Chst4), found in Mus musculus (Mouse).